The sequence spans 440 residues: Thymidine phosphorylase (440 aa).

It belongs to the thymidine/pyrimidine-nucleoside phosphorylase family. In terms of assembly, homodimer.

It carries out the reaction thymidine + phosphate = 2-deoxy-alpha-D-ribose 1-phosphate + thymine. It functions in the pathway pyrimidine metabolism; dTMP biosynthesis via salvage pathway; dTMP from thymine: step 1/2. In terms of biological role, the enzymes which catalyze the reversible phosphorolysis of pyrimidine nucleosides are involved in the degradation of these compounds and in their utilization as carbon and energy sources, or in the rescue of pyrimidine bases for nucleotide synthesis. This Shigella boydii serotype 4 (strain Sb227) protein is Thymidine phosphorylase.